Reading from the N-terminus, the 105-residue chain is UPF0145 protein Mevan_1624 (105 aa).

Belongs to the UPF0145 family.

The polypeptide is UPF0145 protein Mevan_1624 (Methanococcus vannielii (strain ATCC 35089 / DSM 1224 / JCM 13029 / OCM 148 / SB)).